Consider the following 259-residue polypeptide: Deoxyribose-phosphate aldolase (259 aa).

Catalysis depends on D102, which acts as the Proton donor/acceptor. Residue K167 is the Schiff-base intermediate with acetaldehyde of the active site. K201 serves as the catalytic Proton donor/acceptor.

It belongs to the DeoC/FbaB aldolase family. DeoC type 2 subfamily.

Its subcellular location is the cytoplasm. The catalysed reaction is 2-deoxy-D-ribose 5-phosphate = D-glyceraldehyde 3-phosphate + acetaldehyde. It functions in the pathway carbohydrate degradation; 2-deoxy-D-ribose 1-phosphate degradation; D-glyceraldehyde 3-phosphate and acetaldehyde from 2-deoxy-alpha-D-ribose 1-phosphate: step 2/2. Catalyzes a reversible aldol reaction between acetaldehyde and D-glyceraldehyde 3-phosphate to generate 2-deoxy-D-ribose 5-phosphate. In Cronobacter sakazakii (strain ATCC BAA-894) (Enterobacter sakazakii), this protein is Deoxyribose-phosphate aldolase.